Here is a 177-residue protein sequence, read N- to C-terminus: Small ribosomal subunit protein eS10z (177 aa).

Residues 90-177 (TLKKSAKPGG…AAAPSGSGFP (88 aa)) form a disordered region. The span at 108–140 (DRQRGPPRSDGDRPRFGDRDGYRGGPRGGDEKG) shows a compositional bias: basic and acidic residues. Residues 141-150 (GAPADFQPSF) show a composition bias toward low complexity. A compositionally biased stretch (gly residues) spans 151–165 (QGGGGRPGFGRGAGG). The span at 166–177 (YSAAAPSGSGFP) shows a compositional bias: low complexity.

This sequence belongs to the eukaryotic ribosomal protein eS10 family.

The protein localises to the cytoplasm. The polypeptide is Small ribosomal subunit protein eS10z (RPS10A) (Arabidopsis thaliana (Mouse-ear cress)).